The following is a 518-amino-acid chain: Cytochrome P450 monooxygenase psoD (518 aa).

A heme-binding site is contributed by Cys442.

It belongs to the cytochrome P450 family. It depends on heme as a cofactor.

It functions in the pathway secondary metabolite biosynthesis. In terms of biological role, cytochrome P450 monooxygenase; part of the gene cluster that mediates the biosynthesis of pseurotin A, a competitive inhibitor of chitin synthase and an inducer of nerve-cell proliferation. The PKS-NRPS hybrid synthetase psoA is responsible for the biosynthesis of azaspirene, one of the first intermediates having the 1-oxa-7-azaspiro[4,4]-non-2-ene-4,6-dione core of pseurotin, via condensation of one acetyl-CoA, 4 malonyl-CoA, and a L-phenylalanine molecule. The dual-functional monooxygenase/methyltransferase psoF seems to be involved in the addition of the C3 methyl group onto the pseurotin scaffold. Azaspirene is then converted to synerazol through 4 steps including oxidation of C17 by the cytochrome P450 monooxygenase psoD, O-methylation of the hydroxy group of C8 by the methyltransferase psoC, and the trans-to-cis isomerization of the C13 olefin by the glutathione S-transferase psoE. The fourth step of synerazol production is performed by the dual-functional monooxygenase/methyltransferase psoF which seems to catalyze the epoxidation of the intermediate deepoxy-synerazol. Synerazol can be attacked by a water molecule nonenzymatically at two different positions to yield two diol products, pseurotin A and pseurotin D. This is Cytochrome P450 monooxygenase psoD from Aspergillus fumigatus (strain ATCC MYA-4609 / CBS 101355 / FGSC A1100 / Af293) (Neosartorya fumigata).